We begin with the raw amino-acid sequence, 1208 residues long: Period circadian protein (1208 aa).

Disordered stretches follow at residues 1–171 (MEGG…AAQS) and 214–235 (GPGKVEPVPGVPGTAAAGTGQR). Residues 16–47 (SDSAYSNSCSNSQSQRSGSSKSRLSGSHSSGS) are compositionally biased toward low complexity. A Nuclear localization signal motif is present at residues 66–79 (KRNKDKSRKKKKNK). Over residues 66–79 (KRNKDKSRKKKKNK) the composition is skewed to basic residues. Composition is skewed to basic and acidic residues over residues 129–139 (QHGEDHSEPKA) and 147–164 (EGDRSGSESEAERVENAA). Low complexity predominate over residues 217–232 (KVEPVPGVPGTAAAGT). 2 consecutive PAS domains span residues 242–377 (ESFC…ATPI) and 395–501 (FAIR…RVFQ). Disordered stretches follow at residues 636–747 (VTAP…SSNY), 802–821 (EYSGPGHGIKRGGSHSWEGE), 961–982 (TSPTRSPRMHKHPHKGGPEMPT), and 1076–1208 (VTTP…HGDG). A compositionally biased stretch (polar residues) spans 679–697 (NFTTASNIHMSSVTNTSIA). Repeat copies occupy residues 698–699 (GT), 701–702 (GT), 703–704 (GT), 705–706 (GT), 707–708 (GT), 709–710 (GT), 711–712 (GT), 713–714 (GT), 715–716 (GT), 717–718 (GT), 719–720 (GT), 721–722 (GT), 723–724 (GT), 725–726 (GT), 727–728 (GT), 729–730 (GT), and 731–732 (GN). Over residues 698–740 (GTGGTGTGTGTGTGTGTGTGTGTGTGTGTGTGTGNGTNSGTGT) the composition is skewed to gly residues. Residues 698–742 (GTGGTGTGTGTGTGTGTGTGTGTGTGTGTGTGTGNGTNSGTGTGS) are 21 X 2 AA approximate tandem repeats of G-[TN]. Residues 734 to 735 (TN) form an 18; approximate repeat. Repeat copies occupy residues 737-738 (GT) and 739-740 (GT). A 21; approximate repeat occupies 741-742 (GS). Over residues 1076–1092 (VTTPSQVQRSSSQSASV) the composition is skewed to low complexity. Over residues 1127 to 1138 (LPCSSSNPANNK) the composition is skewed to polar residues. The span at 1142–1161 (DSNGNSDDMDGSSFSSFYSS) shows a compositional bias: low complexity. A compositionally biased stretch (basic and acidic residues) spans 1193–1208 (KIMEHPEEDQTQHGDG).

In terms of assembly, forms a heterodimer with timeless (TIM); the complex then translocates into the nucleus. In terms of processing, phosphorylated with a circadian rhythmicity, probably by the double-time protein (dbt). Phosphorylation could be implicated in the stability of per monomer and in the formation of heterodimer per-tim.

The protein localises to the nucleus. The protein resides in the cytoplasm. Its subcellular location is the perinuclear region. Its function is as follows. Essential for biological clock functions. Determines the period length of circadian and ultradian rhythms; an increase in PER dosage leads to shortened circadian rhythms and a decrease leads to lengthened circadian rhythms. Essential for the circadian rhythmicity of locomotor activity, eclosion behavior, and for the rhythmic component of the male courtship song that originates in the thoracic nervous system. The biological cycle depends on the rhythmic formation and nuclear localization of the TIM-PER complex. Light induces the degradation of TIM, which promotes elimination of PER. Nuclear activity of the heterodimer coordinatively regulates PER and TIM transcription through a negative feedback loop. Behaves as a negative element in circadian transcriptional loop. Does not appear to bind DNA, suggesting indirect transcriptional inhibition. In Drosophila yakuba (Fruit fly), this protein is Period circadian protein (per).